The primary structure comprises 1379 residues: DNA-directed RNA polymerase subunit beta (1379 aa).

Belongs to the RNA polymerase beta chain family. The RNAP catalytic core consists of 2 alpha, 1 beta, 1 beta' and 1 omega subunit. When a sigma factor is associated with the core the holoenzyme is formed, which can initiate transcription.

It catalyses the reaction RNA(n) + a ribonucleoside 5'-triphosphate = RNA(n+1) + diphosphate. Its function is as follows. DNA-dependent RNA polymerase catalyzes the transcription of DNA into RNA using the four ribonucleoside triphosphates as substrates. The sequence is that of DNA-directed RNA polymerase subunit beta from Rhizobium johnstonii (strain DSM 114642 / LMG 32736 / 3841) (Rhizobium leguminosarum bv. viciae).